The chain runs to 365 residues: WAT1-related protein At4g01440 (365 aa).

10 consecutive transmembrane segments (helical) span residues Trp-8–Val-28, Val-40–Trp-60, Ile-72–Leu-92, Thr-101–Phe-121, Ala-132–Met-152, Trp-181–Ile-201, Tyr-213–Ile-233, Ile-249–Trp-269, Ile-277–Ile-297, and Ile-302–Leu-322. EamA domains are found at residues Asn-25 to Ile-144 and Gly-196 to Leu-321.

Belongs to the drug/metabolite transporter (DMT) superfamily. Plant drug/metabolite exporter (P-DME) (TC 2.A.7.4) family.

It is found in the membrane. The chain is WAT1-related protein At4g01440 from Arabidopsis thaliana (Mouse-ear cress).